Reading from the N-terminus, the 626-residue chain is E3 ubiquitin-protein ligase HRD1 (626 aa).

Residues 1–15 form the signal peptide; that stretch reads MQLLLSSVCMALTSA. At 16–38 the chain is on the lumenal side; it reads VIGFAYYQKQQFYPAVVYITKSN. The chain crosses the membrane as a helical span at residues 39-59; the sequence is ASMGVIYIQFFVIVFMFGKLL. At 60-96 the chain is on the cytoplasmic side; sequence SKIFLGTLRAAEFEHLLERFWYALTETCLAFTVFRDD. Residues 97–117 traverse the membrane as a helical segment; sequence FNPRFVALFTVLLFLKSFHWL. The Lumenal segment spans residues 118-128; it reads AEERVDFMERS. The chain crosses the membrane as a helical span at residues 129-149; it reads PVLGWLFHIRVGSLLTVLGIL. Topologically, residues 150–167 are cytoplasmic; sequence DYVLLIHAYNSTLVRGPT. Residues 168–188 traverse the membrane as a helical segment; it reads VQLVFGFEYAILLTVIASTAI. At 189–222 the chain is on the lumenal side; the sequence is KYVLHAAEMRTDTPWENKAVFLLYTELVIGLIKV. The helical transmembrane segment at 223-243 threads the bilayer; sequence VLYILFVVIMAKIYALPMFVF. Residues 234–268 form an interaction with p53/TP53 region; it reads KIYALPMFVFRPMFFTIRNFRKALNDVIMSRRAIR. At 244–626 the chain is on the cytoplasmic side; that stretch reads RPMFFTIRNF…AATNERTTAE (383 aa). Residues 289–328 form an RING-type; atypical zinc finger; it reads CIICREDMVNHSKKLPCGHIFHTTCLRSWFQRQQTCPTCR. The segment at 569–600 is disordered; the sequence is DADEDDIPSTATEAVSIPNSDADFEENSSELG. Polar residues predominate over residues 577-587; it reads STATEAVSIPN.

This sequence belongs to the HRD1 family. As to quaternary structure, homodimer. Interacts with p53. May interact with Septin2.

The protein resides in the endoplasmic reticulum membrane. The catalysed reaction is S-ubiquitinyl-[E2 ubiquitin-conjugating enzyme]-L-cysteine + [acceptor protein]-L-lysine = [E2 ubiquitin-conjugating enzyme]-L-cysteine + N(6)-ubiquitinyl-[acceptor protein]-L-lysine.. It participates in protein modification; protein ubiquitination. Functionally, acts as an E3 ubiquitin-protein ligase which accepts ubiquitin specifically from endoplasmic reticulum-associated UBC7 E2 ligase and transfers it to substrates, promoting their degradation. Component of the endoplasmic reticulum quality control (ERQC) system also called ER-associated degradation (ERAD) involved in ubiquitin-dependent degradation of misfolded endoplasmic reticulum proteins. Also promotes the degradation of normal but naturally short-lived proteins. Protects cells from ER stress-induced apoptosis. Sequesters p53 in the cytoplasm and promotes its degradation, thereby negatively regulating its biological function in transcription, cell cycle regulation and apoptosis. This is E3 ubiquitin-protein ligase HRD1 (sip3) from Drosophila melanogaster (Fruit fly).